A 660-amino-acid chain; its full sequence is Arginine--tRNA ligase, cytoplasmic (660 aa).

At Met1 the chain carries N-acetylmethionine. The tract at residues 1-72 (MDALVAHCSA…QAERNKPTKT (72 aa)) is could be involved in the assembly of the multisynthetase complex. L-arginine contacts are provided by residues 200–202 (SPN), His211, Tyr384, Asp388, and Gln412. The 'HIGH' region motif lies at 201 to 212 (PNIAKEMHVGHL). Residues 529–543 (NTAAYLLYAFTRIRS) are interaction with tRNA.

This sequence belongs to the class-I aminoacyl-tRNA synthetase family. In terms of assembly, interacts (via N-terminus) with AIMP1 (via N-terminus); this stimulates its catalytic activity. Interacts (via N-terminus) with LARS2 (via C-terminus). Monomer. Part of a multisubunit complex that groups tRNA ligases for Arg (RARS1), Asp (DARS1), Gln (QARS1), Ile (IARS1), Leu (LARS1), Lys (KARS1), Met (MARS1) the bifunctional ligase for Glu and Pro (EPRS1) and the auxiliary subunits AIMP1/p43, AIMP2/p38 and EEF1E1/p18. Interacts with QARS1. Part of a complex composed of RARS1, QARS1 and AIMP1.

The protein resides in the cytoplasm. Its subcellular location is the cytosol. The enzyme catalyses tRNA(Arg) + L-arginine + ATP = L-arginyl-tRNA(Arg) + AMP + diphosphate. In terms of biological role, forms part of a macromolecular complex that catalyzes the attachment of specific amino acids to cognate tRNAs during protein synthesis. Modulates the secretion of AIMP1 and may be involved in generation of the inflammatory cytokine EMAP2 from AIMP1. In Bos taurus (Bovine), this protein is Arginine--tRNA ligase, cytoplasmic (RARS1).